The sequence spans 363 residues: Chorismate synthase (363 aa).

Residues 44–63 are disordered; the sequence is DLDRRKPGTSRHTTQRQEPD. Residues Arg48 and Arg54 each contribute to the NADP(+) site. Residues 125-127, 237-238, Gly277, 292-296, and Arg318 contribute to the FMN site; these read RSS, NA, and KATSS.

This sequence belongs to the chorismate synthase family. Homotetramer. FMNH2 is required as a cofactor.

The enzyme catalyses 5-O-(1-carboxyvinyl)-3-phosphoshikimate = chorismate + phosphate. Its pathway is metabolic intermediate biosynthesis; chorismate biosynthesis; chorismate from D-erythrose 4-phosphate and phosphoenolpyruvate: step 7/7. Its function is as follows. Catalyzes the anti-1,4-elimination of the C-3 phosphate and the C-6 proR hydrogen from 5-enolpyruvylshikimate-3-phosphate (EPSP) to yield chorismate, which is the branch point compound that serves as the starting substrate for the three terminal pathways of aromatic amino acid biosynthesis. This reaction introduces a second double bond into the aromatic ring system. The polypeptide is Chorismate synthase (Pseudomonas fluorescens (strain SBW25)).